The primary structure comprises 175 residues: Small ribosomal subunit protein uS5 (175 aa).

An S5 DRBM domain is found at 11–74 (LSEVLVDVNR…QAAKKRMMKV (64 aa)).

This sequence belongs to the universal ribosomal protein uS5 family. In terms of assembly, part of the 30S ribosomal subunit. Contacts proteins S4 and S8.

With S4 and S12 plays an important role in translational accuracy. In terms of biological role, located at the back of the 30S subunit body where it stabilizes the conformation of the head with respect to the body. The chain is Small ribosomal subunit protein uS5 from Rickettsia typhi (strain ATCC VR-144 / Wilmington).